Consider the following 464-residue polypeptide: UDP-glycosyltransferase 76F2 (464 aa).

UDP-alpha-D-glucose-binding positions include serine 279, 338–340 (VNQ), 355–363 (HCGWNSTIE), and 377–380 (FSDQ).

Belongs to the UDP-glycosyltransferase family.

This Arabidopsis thaliana (Mouse-ear cress) protein is UDP-glycosyltransferase 76F2 (UGT76F2).